A 220-amino-acid chain; its full sequence is ATP phosphoribosyltransferase (220 aa).

It belongs to the ATP phosphoribosyltransferase family. Short subfamily. In terms of assembly, heteromultimer composed of HisG and HisZ subunits.

Its subcellular location is the cytoplasm. It carries out the reaction 1-(5-phospho-beta-D-ribosyl)-ATP + diphosphate = 5-phospho-alpha-D-ribose 1-diphosphate + ATP. The protein operates within amino-acid biosynthesis; L-histidine biosynthesis; L-histidine from 5-phospho-alpha-D-ribose 1-diphosphate: step 1/9. Catalyzes the condensation of ATP and 5-phosphoribose 1-diphosphate to form N'-(5'-phosphoribosyl)-ATP (PR-ATP). Has a crucial role in the pathway because the rate of histidine biosynthesis seems to be controlled primarily by regulation of HisG enzymatic activity. The protein is ATP phosphoribosyltransferase of Anaeromyxobacter sp. (strain Fw109-5).